Reading from the N-terminus, the 239-residue chain is 1-(5-phosphoribosyl)-5-[(5-phosphoribosylamino)methylideneamino] imidazole-4-carboxamide isomerase (239 aa).

The active-site Proton acceptor is the Asp-12. The active-site Proton donor is the Asp-132.

This sequence belongs to the HisA/HisF family.

The protein resides in the cytoplasm. The enzyme catalyses 1-(5-phospho-beta-D-ribosyl)-5-[(5-phospho-beta-D-ribosylamino)methylideneamino]imidazole-4-carboxamide = 5-[(5-phospho-1-deoxy-D-ribulos-1-ylimino)methylamino]-1-(5-phospho-beta-D-ribosyl)imidazole-4-carboxamide. Its pathway is amino-acid biosynthesis; L-histidine biosynthesis; L-histidine from 5-phospho-alpha-D-ribose 1-diphosphate: step 4/9. This is 1-(5-phosphoribosyl)-5-[(5-phosphoribosylamino)methylideneamino] imidazole-4-carboxamide isomerase from Natronomonas pharaonis (strain ATCC 35678 / DSM 2160 / CIP 103997 / JCM 8858 / NBRC 14720 / NCIMB 2260 / Gabara) (Halobacterium pharaonis).